Consider the following 143-residue polypeptide: MAKKIIGFIKLQIPAGKANPSPPVGPALGQRGLNIMEFCKAFNAQTQGMEPGLPVPVVITAFADKSFTFVMKSPPATVLIKKAAGITKGSPKPHTDKVGKITRAQAEEIAKAKNADLTAADLDAAVRTIAGSARSMGITVEGL.

Belongs to the universal ribosomal protein uL11 family. As to quaternary structure, part of the ribosomal stalk of the 50S ribosomal subunit. Interacts with L10 and the large rRNA to form the base of the stalk. L10 forms an elongated spine to which L12 dimers bind in a sequential fashion forming a multimeric L10(L12)X complex. Post-translationally, one or more lysine residues are methylated.

Forms part of the ribosomal stalk which helps the ribosome interact with GTP-bound translation factors. In Cupriavidus metallidurans (strain ATCC 43123 / DSM 2839 / NBRC 102507 / CH34) (Ralstonia metallidurans), this protein is Large ribosomal subunit protein uL11.